The sequence spans 764 residues: FAST kinase domain-containing protein 5, mitochondrial (764 aa).

Phosphoserine is present on serine 95. At lysine 507 the chain carries N6-acetyllysine. An RAP domain is found at 697–757; sequence LAIQFTNRNQ…RLEKLAFLHE (61 aa).

The protein belongs to the FAST kinase family. Found in a complex with GRSF1, DDX28, DHX30 and FASTKD2. Associates with the 12S mitochondrial rRNA (12S mt-rRNA).

It localises to the mitochondrion matrix. The protein resides in the mitochondrion nucleoid. In terms of biological role, plays an important role in the processing of non-canonical mitochondrial mRNA precursors. This Macaca fascicularis (Crab-eating macaque) protein is FAST kinase domain-containing protein 5, mitochondrial (FASTKD5).